The primary structure comprises 433 residues: uncharacterized protein (433 aa).

Residues 258 to 304 adopt a coiled-coil conformation; it reads KNIKSKLLLELRQLKNNITNLQNKITKTMDNVKKIIEEIEQSKNKVT.

This sequence belongs to the mimivirus R160 family.

The protein localises to the virion. This is an uncharacterized protein from Acanthamoeba polyphaga mimivirus (APMV).